Reading from the N-terminus, the 95-residue chain is Aspartyl/glutamyl-tRNA(Asn/Gln) amidotransferase subunit C (95 aa).

Belongs to the GatC family. As to quaternary structure, heterotrimer of A, B and C subunits.

The catalysed reaction is L-glutamyl-tRNA(Gln) + L-glutamine + ATP + H2O = L-glutaminyl-tRNA(Gln) + L-glutamate + ADP + phosphate + H(+). It carries out the reaction L-aspartyl-tRNA(Asn) + L-glutamine + ATP + H2O = L-asparaginyl-tRNA(Asn) + L-glutamate + ADP + phosphate + 2 H(+). Its function is as follows. Allows the formation of correctly charged Asn-tRNA(Asn) or Gln-tRNA(Gln) through the transamidation of misacylated Asp-tRNA(Asn) or Glu-tRNA(Gln) in organisms which lack either or both of asparaginyl-tRNA or glutaminyl-tRNA synthetases. The reaction takes place in the presence of glutamine and ATP through an activated phospho-Asp-tRNA(Asn) or phospho-Glu-tRNA(Gln). The chain is Aspartyl/glutamyl-tRNA(Asn/Gln) amidotransferase subunit C from Bartonella henselae (strain ATCC 49882 / DSM 28221 / CCUG 30454 / Houston 1) (Rochalimaea henselae).